Consider the following 344-residue polypeptide: Protein RecA (344 aa).

66–73 (GPESSGKT) is a binding site for ATP.

It belongs to the RecA family.

It is found in the cytoplasm. In terms of biological role, can catalyze the hydrolysis of ATP in the presence of single-stranded DNA, the ATP-dependent uptake of single-stranded DNA by duplex DNA, and the ATP-dependent hybridization of homologous single-stranded DNAs. It interacts with LexA causing its activation and leading to its autocatalytic cleavage. This is Protein RecA from Methylobacillus flagellatus.